The primary structure comprises 1857 residues: Ankyrin repeat domain-containing protein 31 (1857 aa).

Disordered stretches follow at residues 1–30 (MENG…EDEE) and 195–215 (SEPG…DEES). The span at 195–207 (SEPGEEVTQTMTS) shows a compositional bias: polar residues. ANK repeat units follow at residues 475-504 (FGEN…NVNQ), 508-537 (DGWT…DVNV), and 541-570 (YQIT…DPLF). The span at 676–691 (KFGKSNLNSVKNSRTN) shows a compositional bias: polar residues. Disordered stretches follow at residues 676–711 (KFGK…VDDR), 813–844 (VTTH…KGKA), 995–1038 (RDSS…TVVH), 1046–1065 (KAEK…NTDF), and 1075–1137 (ANSS…QNFR). The span at 692–704 (VSKRKGQKNRQQK) shows a compositional bias: basic residues. Residues 814–839 (TTHQQPHTNQEQYSSPYKSLGNNSSN) are compositionally biased toward polar residues. A compositionally biased stretch (basic and acidic residues) spans 1008–1019 (SLERKQDTDKNY). Over residues 1023 to 1032 (GPNTSSSSRP) the composition is skewed to polar residues. Over residues 1082–1136 (QRKEKENVRKSDAELTHNDSEAERTLKSCEEKKKNMDSETHSPCDIQEHRKDQNF) the composition is skewed to basic and acidic residues. ANK repeat units follow at residues 1162-1191 (KGES…DVNL), 1195-1224 (AGWT…NVNC), and 1228-1257 (DGIV…NPNQ). Disordered stretches follow at residues 1457–1479 (NSDI…AHAQ), 1540–1570 (GGLL…AENS), 1609–1640 (DPHS…AEPL), and 1663–1697 (AAAA…TTPR). Residues 1555 to 1570 (ASSSQPAALTPHAENS) show a composition bias toward polar residues. Residues 1663–1683 (AAAASHTDSTQSSLSSASAHQ) are compositionally biased toward low complexity. Residues 1687–1782 (KTVPHRNTTP…TYLGRELVKC (96 aa)) form the RAMA domain.

Interacts with REC114; the interaction is direct. Interacts with IHO1. In terms of tissue distribution, present in meiotic cells (at protein level).

The protein localises to the nucleus. The protein resides in the chromosome. Its function is as follows. Required for DNA double-strand breaks (DSBs) formation during meiotic recombination. Regulates the spatial and temporal patterns of pre-DSB recombinosome assembly and recombination activity by acting as a scaffold that anchors REC114 and other factors to specific genomic locations, thereby regulating DSB formation. Plays a key role in recombination in the pseudoautosomal regions of sex chromosomes. This chain is Ankyrin repeat domain-containing protein 31, found in Mus musculus (Mouse).